We begin with the raw amino-acid sequence, 911 residues long: Transferrin-binding protein A (911 aa).

A signal peptide spans methionine 1–alanine 24. The short motif at aspartate 38–lysine 45 is the TonB box element. In terms of domain architecture, TBDR plug spans arginine 51–lysine 176. The TBDR beta-barrel domain occupies glutamine 187–phenylalanine 911. Residues asparagine 894–phenylalanine 911 carry the TonB C-terminal box motif.

It belongs to the TonB-dependent receptor family. As to quaternary structure, binds both human apo- and holo-transferrin (TF), via the TF C-terminus. Forms a large complex with TF and TbpB.

It is found in the cell outer membrane. In terms of biological role, neisseria acquires iron by extracting it from serum transferrin (TF) in its human host. Acts as a TF receptor and is required for TF utilization. Binds both apo- and holo-TF, via the TF C-terminus. This chain is Transferrin-binding protein A, found in Neisseria meningitidis serogroup B.